We begin with the raw amino-acid sequence, 298 residues long: Acetylglutamate kinase (298 aa).

Substrate is bound by residues 67-68, R89, and N193; that span reads GG.

This sequence belongs to the acetylglutamate kinase family. ArgB subfamily.

Its subcellular location is the cytoplasm. The enzyme catalyses N-acetyl-L-glutamate + ATP = N-acetyl-L-glutamyl 5-phosphate + ADP. It participates in amino-acid biosynthesis; L-arginine biosynthesis; N(2)-acetyl-L-ornithine from L-glutamate: step 2/4. Catalyzes the ATP-dependent phosphorylation of N-acetyl-L-glutamate. In Desulfitobacterium hafniense (strain DSM 10664 / DCB-2), this protein is Acetylglutamate kinase.